Here is a 434-residue protein sequence, read N- to C-terminus: Tryptophan synthase beta chain (434 aa).

N6-(pyridoxal phosphate)lysine is present on Lys-92. The disordered stretch occupies residues 411–434 (VKGGVATSPESFDASGAKGAGSQS).

Belongs to the TrpB family. In terms of assembly, tetramer of two alpha and two beta chains. Pyridoxal 5'-phosphate is required as a cofactor.

It catalyses the reaction (1S,2R)-1-C-(indol-3-yl)glycerol 3-phosphate + L-serine = D-glyceraldehyde 3-phosphate + L-tryptophan + H2O. It participates in amino-acid biosynthesis; L-tryptophan biosynthesis; L-tryptophan from chorismate: step 5/5. Its function is as follows. The beta subunit is responsible for the synthesis of L-tryptophan from indole and L-serine. This Polaromonas naphthalenivorans (strain CJ2) protein is Tryptophan synthase beta chain.